The following is a 152-amino-acid chain: Lipoprotein signal peptidase (152 aa).

The next 3 helical transmembrane spans lie at 5-25 (LFVLSLILLVALDQLSKFWIV), 61-81 (WFFVVITVLVIGYAIYYLATH), and 84-104 (LNIWKQLALLLIISGGIGNFI). Residues aspartate 114 and aspartate 130 contribute to the active site. Residues 125-145 (IFNVADSYLTVGVILLVICLW) traverse the membrane as a helical segment.

The protein belongs to the peptidase A8 family.

It localises to the cell membrane. The enzyme catalyses Release of signal peptides from bacterial membrane prolipoproteins. Hydrolyzes -Xaa-Yaa-Zaa-|-(S,diacylglyceryl)Cys-, in which Xaa is hydrophobic (preferably Leu), and Yaa (Ala or Ser) and Zaa (Gly or Ala) have small, neutral side chains.. It functions in the pathway protein modification; lipoprotein biosynthesis (signal peptide cleavage). This protein specifically catalyzes the removal of signal peptides from prolipoproteins. The polypeptide is Lipoprotein signal peptidase (Streptococcus pyogenes serotype M18 (strain MGAS8232)).